The sequence spans 253 residues: MKTLQAKLSNKKNNFVPYIMAGDHERGLEGLNETIQLLEQAGSSAIEIGVPFSDPVADGPVIEQAGLRALAKNVSLSKILDSLKSIETEVPLVIMTYFNPVYQFGIENFVAALESTAVKGLIIPDLPKEHEAYIKPFITDKDICLVPLVSLTTPISRQKELVVDAEGFIYAVAINGVTGKENAYSNQLDHHLETLSKLTDIPVLTGFGISTLTDVERFNKVSAGVIVGSKIVRDLHENKESDVIKFIENAINF.

Catalysis depends on proton acceptor residues E47 and D58.

This sequence belongs to the TrpA family. In terms of assembly, tetramer of two alpha and two beta chains.

The enzyme catalyses (1S,2R)-1-C-(indol-3-yl)glycerol 3-phosphate + L-serine = D-glyceraldehyde 3-phosphate + L-tryptophan + H2O. It functions in the pathway amino-acid biosynthesis; L-tryptophan biosynthesis; L-tryptophan from chorismate: step 5/5. The alpha subunit is responsible for the aldol cleavage of indoleglycerol phosphate to indole and glyceraldehyde 3-phosphate. The sequence is that of Tryptophan synthase alpha chain from Lactococcus lactis subsp. cremoris (strain MG1363).